The following is a 99-amino-acid chain: High mobility group nucleosome-binding domain-containing protein 3 (99 aa).

Basic and acidic residues-rich tracts occupy residues 1–25 and 39–53; these read MPKR…EPTR and PESK…KEPG. The segment at 1 to 99 is disordered; the sequence is MPKRKSPENT…RTESIEKEGE (99 aa). At Ser6 the chain carries Phosphoserine. A Phosphothreonine modification is found at Thr10. Phosphoserine occurs at positions 78 and 93. Basic and acidic residues predominate over residues 83 to 99; sequence TKVEEAQRTESIEKEGE.

It belongs to the HMGN family. As to quaternary structure, interacts with the ligand binding domain of the thyroid receptor (TR) (in vitro). Requires the presence of thyroid hormone for its interaction. Interacts with transcriptional regulator SEHBP. Interacts with nucleosomes. In terms of tissue distribution, expressed in the brain, eye, prostate, thyroid, kidney, testis, glial cells and insulin-producing cells of the Langerhans pancreatic islets. In the brain, expressed in the lateral olfactory tract, anterior commissure, corpus callosum, internal capsule, fornix, stria medullans, optic tract, axon bundles, Purkinje cell layer and granular layer of the cerebellum. In retina, expressed in the nuclei of cells in the inner nuclear layer including amacrine, bipolar and horizontal neurons and in the nuclei of ganglion neurons. Detected at low levels in the liver.

The protein localises to the nucleus. In terms of biological role, binds to nucleosomes, regulating chromatin structure and consequently, chromatin-dependent processes such as transcription, DNA replication and DNA repair. Affects both insulin and glucagon levels and modulates the expression of pancreatic genes involved in insulin secretion. Regulates the expression of the glucose transporter SLC2A2 by binding specifically to its promoter region and recruiting PDX1 and additional transcription factors. Regulates the expression of SLC6A9, a glycine transporter which regulates the glycine concentration in synaptic junctions in the central nervous system, by binding to its transcription start site. May play a role in ocular development and astrocyte function. This Mus musculus (Mouse) protein is High mobility group nucleosome-binding domain-containing protein 3 (Hmgn3).